The following is a 95-amino-acid chain: Integration host factor subunit beta (95 aa).

This sequence belongs to the bacterial histone-like protein family. Heterodimer of an alpha and a beta chain.

In terms of biological role, this protein is one of the two subunits of integration host factor, a specific DNA-binding protein that functions in genetic recombination as well as in transcriptional and translational control. In Shewanella sp. (strain ANA-3), this protein is Integration host factor subunit beta.